Here is a 259-residue protein sequence, read N- to C-terminus: MKSAVNFELPLAVKIRKQIVQALNDFNMIEDGDKVMVCVSGGKDSSVLLALLTEIQRRSERKFQIEAAILDQKQPGFDVSKFKVWVESLGVPFHIVEKDTYSIVKEKVQGGTFCSLCSRLRRAILYDFAHANGFTKLALGHHRDDVVHTALLNMFYVGTTAAMPPKLKSDDERNILVRPLCYVSERDIEELAAEWAFPVIPCNLCGSQDGLKRQRIKKLVRDLEKEIPNIYASIQTSMTNIKPSQLMDQDLWDFKNLKT.

A PP-loop motif motif is present at residues 40-45 (SGGKDS). Residues cysteine 114, cysteine 117, and cysteine 205 each contribute to the [4Fe-4S] cluster site.

This sequence belongs to the TtcA family. Homodimer. Mg(2+) serves as cofactor. The cofactor is [4Fe-4S] cluster.

Its subcellular location is the cytoplasm. It carries out the reaction cytidine(32) in tRNA + S-sulfanyl-L-cysteinyl-[cysteine desulfurase] + AH2 + ATP = 2-thiocytidine(32) in tRNA + L-cysteinyl-[cysteine desulfurase] + A + AMP + diphosphate + H(+). Its pathway is tRNA modification. Functionally, catalyzes the ATP-dependent 2-thiolation of cytidine in position 32 of tRNA, to form 2-thiocytidine (s(2)C32). The sulfur atoms are provided by the cysteine/cysteine desulfurase (IscS) system. The chain is tRNA-cytidine(32) 2-sulfurtransferase from Bdellovibrio bacteriovorus (strain ATCC 15356 / DSM 50701 / NCIMB 9529 / HD100).